A 341-amino-acid polypeptide reads, in one-letter code: DNA-directed RNA polymerase subunit alpha (341 aa).

Positions 1-233 are alpha N-terminal domain (alpha-NTD); that stretch reads MIRDEIPISA…NLFIPFLHAE (233 aa). Residues 265–341 form an alpha C-terminal domain (alpha-CTD) region; that stretch reads TKGVTFKHIF…NLPKNKLHFH (77 aa).

Belongs to the RNA polymerase alpha chain family. In terms of assembly, in plastids the minimal PEP RNA polymerase catalytic core is composed of four subunits: alpha, beta, beta', and beta''. When a (nuclear-encoded) sigma factor is associated with the core the holoenzyme is formed, which can initiate transcription.

It is found in the plastid. It localises to the chloroplast. The enzyme catalyses RNA(n) + a ribonucleoside 5'-triphosphate = RNA(n+1) + diphosphate. DNA-dependent RNA polymerase catalyzes the transcription of DNA into RNA using the four ribonucleoside triphosphates as substrates. This Takakia lepidozioides (Moss) protein is DNA-directed RNA polymerase subunit alpha.